The sequence spans 1247 residues: Protein jagged-2 (1247 aa).

An N-terminal signal peptide occupies residues 1-23 (MRARGWGRLPRRLLLLLVLCVQA). Over 24-1082 (TRPMGYFELQ…ETVVMGGSST (1059 aa)) the chain is Extracellular. An N-linked (GlcNAc...) asparagine glycan is attached at asparagine 153. The 45-residue stretch at 196 to 240 (VRCDENYYSATCNKFCRPRNDFFGHYTCDQYGNKACMDGWMGKEC) folds into the DSL domain. 42 cysteine pairs are disulfide-bonded: cysteine 198–cysteine 207, cysteine 211–cysteine 223, cysteine 231–cysteine 240, cysteine 245–cysteine 256, cysteine 249–cysteine 262, cysteine 264–cysteine 273, cysteine 276–cysteine 287, cysteine 282–cysteine 293, cysteine 295–cysteine 304, cysteine 311–cysteine 323, cysteine 317–cysteine 333, cysteine 335–cysteine 344, cysteine 351–cysteine 362, cysteine 356–cysteine 371, cysteine 373–cysteine 382, cysteine 389–cysteine 400, cysteine 394–cysteine 409, cysteine 411–cysteine 420, cysteine 427–cysteine 438, cysteine 432–cysteine 447, cysteine 449–cysteine 458, cysteine 465–cysteine 475, cysteine 469–cysteine 484, cysteine 486–cysteine 495, cysteine 502–cysteine 513, cysteine 507–cysteine 522, cysteine 524–cysteine 533, cysteine 540–cysteine 551, cysteine 545–cysteine 560, cysteine 562–cysteine 571, cysteine 589–cysteine 612, cysteine 606–cysteine 622, cysteine 624–cysteine 633, cysteine 640–cysteine 651, cysteine 645–cysteine 660, cysteine 662–cysteine 671, cysteine 678–cysteine 689, cysteine 683–cysteine 698, cysteine 700–cysteine 709, cysteine 716–cysteine 727, cysteine 721–cysteine 736, and cysteine 738–cysteine 747. In terms of domain architecture, EGF-like 1 spans 241–274 (KEAVCKQGCNLLHGGCTVPGECRCSYGWQGKFCD). The 31-residue stretch at 275-305 (ECVPYPGCVHGSCVEPWHCDCETNWGGLLCD) folds into the EGF-like 2; atypical domain. 2 EGF-like domains span residues 307–345 (DLNYCGSHHPCVNGGTCINAEPDQYLCACPDGYLGKNCE) and 347–383 (AEHACASNPCANGGSCHEVPSGFECHCPSGWNGPTCA). The EGF-like 5; calcium-binding domain maps to 385–421 (DIDECASNPCAAGGTCVDQVDGFECICPEQWVGATCQ). Positions 423–459 (DANECEGKPCLNAFSCKNLIGGYYCDCLPGWKGINCQ) constitute an EGF-like 6; calcium-binding domain. The 36-residue stretch at 461-496 (NINDCHGQCQHGGTCKDLVNGYQCVCPRGFGGRHCE) folds into the EGF-like 7; calcium-binding domain. EGF-like domains follow at residues 498-534 (EYDKCASSPCRRGGICEDLVDGFRCHCPRGLSGLHCE) and 536-572 (DMDLCEPSPCLNGARCYNLEGDYYCACPEDFGGKNCS). The N-linked (GlcNAc...) asparagine glycan is linked to asparagine 570. One can recognise an EGF-like 10; atypical domain in the interval 574 to 634 (PRDTCPGGAC…DSGFTGTYCH (61 aa)). A glycan (N-linked (GlcNAc...) asparagine) is linked at asparagine 619. Residues 636-672 (NIDDCMGQPCRNGGTCIDEVDSFRCFCPSGWEGELCD) enclose the EGF-like 11; calcium-binding domain. The EGF-like 12; calcium-binding domain occupies 674–710 (NPNDCLPDPCHSRGRCYDLVNDFYCACDDGWKGKTCH). EGF-like domains follow at residues 712-748 (REFQCDAYTCSNGGTCYDSGDTFRCACPPGWKGSTCT) and 751-787 (KNSSCVPNPCVNGGTCVGSGDSFSCICRDGWEGRTCT). Asparagine 752 carries an N-linked (GlcNAc...) asparagine glycan. 9 disulfide bridges follow: cysteine 755/cysteine 766, cysteine 760/cysteine 775, cysteine 777/cysteine 786, cysteine 793/cysteine 804, cysteine 798/cysteine 813, cysteine 815/cysteine 824, cysteine 831/cysteine 842, cysteine 836/cysteine 851, and cysteine 853/cysteine 862. In terms of domain architecture, EGF-like 15; calcium-binding spans 789–825 (NTNDCNPLPCYNGGICVDGVNWFRCECAPGFAGPDCR). In terms of domain architecture, EGF-like 16; calcium-binding spans 827–863 (NIDECQSSPCAYGATCVDEINGYRCSCPPGRSGPRCQ). N-linked (GlcNAc...) asparagine glycosylation is present at asparagine 1060. The helical transmembrane segment at 1083–1103 (GLLVPVLCSVFSVLWLACVVI) threads the bilayer. At 1104 to 1247 (CVWWTRKRRK…TKDVRRAGRE (144 aa)) the chain is on the cytoplasmic side. Composition is skewed to basic and acidic residues over residues 1115 to 1125 (RERSRLPRDES), 1192 to 1212 (LSRGDGDSPEAEKFISHKFTK), and 1230 to 1247 (VDNRAVRSTKDVRRAGRE). Disordered stretches follow at residues 1115–1148 (RERSRLPRDESANNQWAPLNPIRNPIERPGGSGL) and 1167–1247 (PRRA…AGRE). Residue serine 1125 is modified to Phosphoserine.

In terms of tissue distribution, found to be highest in fetal thymus, epidermis, foregut dorsal root ganglia and inner ear. In 2-weeK-old mice, abundant in heart, lung, thymus, skeletal muscle, brain and testis. Expression overlaps partially with Notch1 expression.

The protein resides in the membrane. Its function is as follows. Putative Notch ligand involved in the mediation of Notch signaling. Plays an essential role during limb, craniofacial and thymic development. May be involved in myogenesis and in the development of peripheral and central nervous systems. In Mus musculus (Mouse), this protein is Protein jagged-2 (Jag2).